Reading from the N-terminus, the 473-residue chain is Glycine--tRNA ligase (473 aa).

Residues Arg-101 and Glu-172 each coordinate substrate. ATP contacts are provided by residues 204 to 206 (RNE), 214 to 219 (FRTREF), 289 to 290 (EL), and 333 to 336 (GVER). 219-223 (FEQME) provides a ligand contact to substrate. Position 329–333 (329–333 (EPSVG)) interacts with substrate.

This sequence belongs to the class-II aminoacyl-tRNA synthetase family. As to quaternary structure, homodimer.

The protein localises to the cytoplasm. It catalyses the reaction tRNA(Gly) + glycine + ATP = glycyl-tRNA(Gly) + AMP + diphosphate. Functionally, catalyzes the attachment of glycine to tRNA(Gly). The chain is Glycine--tRNA ligase from Ureaplasma parvum serovar 3 (strain ATCC 27815 / 27 / NCTC 11736).